We begin with the raw amino-acid sequence, 253 residues long: Ferritin-2, chloroplastic (253 aa).

A chloroplast-targeting transit peptide spans M1–A45. Positions A46–R82 are extension peptide (EP). The 154-residue stretch at H83–G236 folds into the Ferritin-like diiron domain. 5 residues coordinate Fe cation: E100, E135, H138, E184, and Q218.

This sequence belongs to the ferritin family. In terms of assembly, oligomer of 24 subunits. There are two types of subunits: L (light) chain and H (heavy) chain. The major chain can be light or heavy, depending on the species and tissue type. The functional molecule forms a roughly spherical shell with a diameter of 12 nm and contains a central cavity into which the insoluble mineral iron core is deposited.

The protein localises to the plastid. It is found in the chloroplast. The enzyme catalyses 4 Fe(2+) + O2 + 4 H(+) = 4 Fe(3+) + 2 H2O. Functionally, stores iron in a soluble, non-toxic, readily available form. Important for iron homeostasis. Has ferroxidase activity. Iron is taken up in the ferrous form and deposited as ferric hydroxides after oxidation. This chain is Ferritin-2, chloroplastic (FER2), found in Arabidopsis thaliana (Mouse-ear cress).